Here is a 279-residue protein sequence, read N- to C-terminus: MLTDGSYFHLHLVSDSTGETLITVSRAVAAQYANVSPVEHVYPLVRSQKQLDRVLQEIEESPGIVLFTLLESELVNRLEAKCQQINSPSLSIIGPVMQLFEAYLGASTTGRVGAQHTLNAEYFKRIDALNYSMMHDDGQHVEGLEEADVVLVGVSRTSKTPTSIYLANRGIRTANVPLVAGIPIPHQLETLKKPLVVSLHASPDRLIQVRQNRLLSLGAGAGNDSYIDRQAVTDEVLLARKLSAKYGWSLLDVTRRSIEETAAAIMKLLADRQRQRMSE.

153–160 is a binding site for ADP; the sequence is GVSRTSKT.

The protein belongs to the pyruvate, phosphate/water dikinase regulatory protein family. PDRP subfamily.

It catalyses the reaction N(tele)-phospho-L-histidyl/L-threonyl-[pyruvate, phosphate dikinase] + ADP = N(tele)-phospho-L-histidyl/O-phospho-L-threonyl-[pyruvate, phosphate dikinase] + AMP + H(+). The enzyme catalyses N(tele)-phospho-L-histidyl/O-phospho-L-threonyl-[pyruvate, phosphate dikinase] + phosphate + H(+) = N(tele)-phospho-L-histidyl/L-threonyl-[pyruvate, phosphate dikinase] + diphosphate. Its function is as follows. Bifunctional serine/threonine kinase and phosphorylase involved in the regulation of the pyruvate, phosphate dikinase (PPDK) by catalyzing its phosphorylation/dephosphorylation. In Rhodopseudomonas palustris (strain BisB5), this protein is Putative pyruvate, phosphate dikinase regulatory protein.